The chain runs to 128 residues: Azurin (128 aa).

The region spanning 1–128 (AECKVTVDST…SMMKGTVTLK (128 aa)) is the Plastocyanin-like domain. Residues Cys-3 and Cys-26 are joined by a disulfide bond. Cu cation contacts are provided by His-46, Cys-112, His-117, and Met-121.

It localises to the periplasm. Transfers electrons from cytochrome c551 to cytochrome oxidase. The protein is Azurin of Pseudomonas putida (Arthrobacter siderocapsulatus).